Here is a 386-residue protein sequence, read N- to C-terminus: O-phospho-L-seryl-tRNA:Cys-tRNA synthase (386 aa).

Residues 89–90, asparagine 196, and 219–221 contribute to the pyridoxal 5'-phosphate site; these read AR and SGH. N6-(pyridoxal phosphate)lysine is present on lysine 222.

The protein belongs to the SepCysS family. Homodimer. Interacts with SepRS. Requires pyridoxal 5'-phosphate as cofactor.

It carries out the reaction O-phospho-L-seryl-tRNA(Cys) + hydrogen sulfide + H(+) = L-cysteinyl-tRNA(Cys) + phosphate. Converts O-phospho-L-seryl-tRNA(Cys) (Sep-tRNA(Cys)) to L-cysteinyl-tRNA(Cys) (Cys-tRNA(Cys)). This Methanosarcina acetivorans (strain ATCC 35395 / DSM 2834 / JCM 12185 / C2A) protein is O-phospho-L-seryl-tRNA:Cys-tRNA synthase.